The chain runs to 66 residues: Large ribosomal subunit protein bL35 (66 aa).

A disordered region spans residues 20-40 (GKVKHAQRGKRHGMIKRTKKQ).

It belongs to the bacterial ribosomal protein bL35 family.

The protein is Large ribosomal subunit protein bL35 of Nitrobacter winogradskyi (strain ATCC 25391 / DSM 10237 / CIP 104748 / NCIMB 11846 / Nb-255).